The primary structure comprises 427 residues: Glutamate-1-semialdehyde 2,1-aminomutase (427 aa).

An N6-(pyridoxal phosphate)lysine modification is found at Lys265.

Belongs to the class-III pyridoxal-phosphate-dependent aminotransferase family. HemL subfamily. In terms of assembly, homodimer. It depends on pyridoxal 5'-phosphate as a cofactor.

The protein localises to the cytoplasm. It catalyses the reaction (S)-4-amino-5-oxopentanoate = 5-aminolevulinate. The protein operates within porphyrin-containing compound metabolism; protoporphyrin-IX biosynthesis; 5-aminolevulinate from L-glutamyl-tRNA(Glu): step 2/2. This chain is Glutamate-1-semialdehyde 2,1-aminomutase, found in Pseudomonas entomophila (strain L48).